We begin with the raw amino-acid sequence, 338 residues long: UDP-glucose 4-epimerase (338 aa).

NAD(+)-binding positions include 11–12, 31–36, 58–59, 80–84, asparagine 99, serine 124, tyrosine 149, lysine 153, and phenylalanine 178; these read YI, DNLCNS, DI, and FAGLK. Substrate is bound by residues serine 124 and tyrosine 149. Tyrosine 149 acts as the Proton acceptor in catalysis. Residues asparagine 179, 199–200, 216–218, arginine 231, and 292–295 each bind substrate; these read NL, SVF, and RPGD.

It belongs to the NAD(P)-dependent epimerase/dehydratase family. In terms of assembly, homodimer. Requires NAD(+) as cofactor.

It catalyses the reaction UDP-alpha-D-glucose = UDP-alpha-D-galactose. It participates in carbohydrate metabolism; galactose metabolism. Involved in the metabolism of galactose. Catalyzes the conversion of UDP-galactose (UDP-Gal) to UDP-glucose (UDP-Glc) through a mechanism involving the transient reduction of NAD. The sequence is that of UDP-glucose 4-epimerase (galE) from Pasteurella multocida (strain Pm70).